Consider the following 61-residue polypeptide: Small ribosomal subunit protein uS14 (61 aa).

Zn(2+)-binding residues include cysteine 24, cysteine 27, cysteine 40, and cysteine 43.

It belongs to the universal ribosomal protein uS14 family. Zinc-binding uS14 subfamily. Part of the 30S ribosomal subunit. Contacts proteins S3 and S10. Requires Zn(2+) as cofactor.

In terms of biological role, binds 16S rRNA, required for the assembly of 30S particles and may also be responsible for determining the conformation of the 16S rRNA at the A site. This is Small ribosomal subunit protein uS14 from Finegoldia magna (strain ATCC 29328 / DSM 20472 / WAL 2508) (Peptostreptococcus magnus).